The sequence spans 459 residues: Cysteine--tRNA ligase (459 aa).

Zn(2+) is bound at residue Cys-31. A 'HIGH' region motif is present at residues 33–43 (PTVYYNPHIGN). Zn(2+) contacts are provided by Cys-216, His-241, and Glu-245. The 'KMSKS' region motif lies at 274–278 (KMSKS). Lys-277 contributes to the ATP binding site.

This sequence belongs to the class-I aminoacyl-tRNA synthetase family. Monomer. Zn(2+) serves as cofactor.

It localises to the cytoplasm. The enzyme catalyses tRNA(Cys) + L-cysteine + ATP = L-cysteinyl-tRNA(Cys) + AMP + diphosphate. In Rickettsia africae (strain ESF-5), this protein is Cysteine--tRNA ligase.